The chain runs to 287 residues: Lactamase-like protein nscB (287 aa).

His-62, His-64, Asp-66, and His-67 together coordinate Zn(2+). Asp-66 functions as the Proton donor/acceptor in the catalytic mechanism.

Belongs to the metallo-beta-lactamase superfamily. The cofactor is Zn(2+).

Its pathway is secondary metabolite biosynthesis. In terms of biological role, lactamase-like protein; part of the gene cluster that mediates the biosynthesis of neosartoricin B, a prenylated anthracenone that probably exhibits T-cell antiproliferative activity, suggestive of a physiological role as an immunosuppressive agent. The non-reducing polyketide synthase nscA probably synthesizes and cyclizes the decaketide backbone. The hydrolase nscB then mediates the product release through hydrolysis followed by spontaneous decarboxylation. The prenyltransferase nscD catalyzes the addition of the dimethylallyl group to the aromatic C5. The FAD-dependent monooxygenase nscC is then responsible for the stereospecific hydroxylation at C2. Neosartoricin B can be converted into two additional compounds neosartoricins C and D. Neosartoricin C is a spirocyclic compound that is cyclized through the attack of C3 hydroxyl on C14, followed by dehydration. On the other hand, neosartoricin D is a further cyclized compound in which attack of C2 on C14 in neosartoricin C results in the formation of the acetal-containing dioxabicyclo-octanone ring. Both of these compounds are novel and possibly represent related metabolites of the gene cluster. The sequence is that of Lactamase-like protein nscB from Trichophyton verrucosum (strain HKI 0517).